Here is a 297-residue protein sequence, read N- to C-terminus: MAPSNLPPVFNATSQDMEMLLAAQCHLGSKNLQVHMDPYLWKTRPDGINVINIGKTWEKIVLAARIIAAIDNPADICVISARPYGQRAVLKFAAHTGAVAIAGRFTPGSFTNYITRSFKEPRLIIVTDPRTDAQAIKEASYVNIPVIALCDTDSPTEYVDVAIPTNNKGRHAIGLVWWLLAREVLRLRGTLATRETEWDVVVDLYFYRDPEAEEAKELEEAKAAGVDEIGPGAVESGFGAEGWEASAGTAFGAAAATTTTTNPATATATWEATGGDWASSAPAEGWAGEAPATEAKW.

The tract at residues 276 to 297 is disordered; sequence DWASSAPAEGWAGEAPATEAKW.

Belongs to the universal ribosomal protein uS2 family. In terms of assembly, component of the small ribosomal subunit. Mature ribosomes consist of a small (40S) and a large (60S) subunit. The 40S subunit contains about 33 different proteins and 1 molecule of RNA (18S). The 60S subunit contains about 49 different proteins and 3 molecules of RNA (25S, 5.8S and 5S). Interacts with RPS21.

The protein localises to the cytoplasm. Functionally, required for the assembly and/or stability of the 40S ribosomal subunit. Required for the processing of the 20S rRNA-precursor to mature 18S rRNA in a late step of the maturation of 40S ribosomal subunits. This chain is Small ribosomal subunit protein uS2, found in Uncinocarpus reesii (strain UAMH 1704).